The sequence spans 22 residues: Fuctinin-2 (22 aa).

Positions 1–22 (ELPGLPKGEKEQQEAIEHIDEV) are disordered. Residues 7–22 (KGEKEQQEAIEHIDEV) show a composition bias toward basic and acidic residues.

The protein to human SET/PHAPII protein. As to quaternary structure, oligomer.

The protein localises to the cytoplasm. In terms of biological role, has a role in the physiological regulation of fucosylation processes. The protein is Fuctinin-2 of Rattus norvegicus (Rat).